The chain runs to 568 residues: bZIP transcription factor 60 (568 aa).

2 stretches are compositionally biased toward low complexity: residues 1 to 13 (MAEP…FADL) and 60 to 78 (TTSS…TSSA). 2 disordered regions span residues 1-29 (MAEP…TLGD) and 45-134 (DFDV…RKKQ). Residues 1–240 (MAEPDLLAPF…PAKKARKTKK (240 aa)) are Cytoplasmic-facing. Over residues 103–113 (GGKDGKDDEAK) the composition is skewed to basic and acidic residues. The 61-residue stretch at 111–171 (EAKRRARLVR…AENAALKQQL (61 aa)) folds into the bZIP domain. Residues 113–144 (KRRARLVRNRESAHQSRQRKKQYVEELEGKVK) form a basic motif region. A leucine-zipper region spans residues 150–157 (IADLTARI). Residues 241–261 (VAGVSLLGLLFLMMVCGCLVP) traverse the membrane as a helical segment. Residues 262-568 (AVNRMYGAAY…LPFKSHSPHL (307 aa)) are Lumenal-facing. N-linked (GlcNAc...) asparagine glycosylation is found at Asn307, Asn452, Asn456, Asn488, and Asn499. The interval 479 to 510 (AIPLRGSTSNDTDHFKAPPKNHSQSHAGRKPV) is disordered.

It belongs to the bZIP family.

The protein localises to the endoplasmic reticulum membrane. Its subcellular location is the nucleus. Its function is as follows. Transcription factor involved in endoplasmic reticulum (ER) stress response. Acts as a ER stress sensor and activates the transcription factor BZIP50 and the chaperone BIP1. The chain is bZIP transcription factor 60 from Oryza sativa subsp. japonica (Rice).